Here is a 2400-residue protein sequence, read N- to C-terminus: Retinitis pigmentosa 1-like 1 protein (2400 aa).

Doublecortin domains lie at 34–118 (KKIT…GPGR) and 152–231 (RRIL…PAMK). Disordered stretches follow at residues 104 to 152 (CSDK…KTPR), 230 to 310 (MKNA…DDMK), 444 to 1064 (GRER…DREA), 1188 to 1251 (AMTE…GDLE), 1275 to 1501 (EAER…GAAE), and 1697 to 2400 (RGEH…DLDF). A compositionally biased stretch (polar residues) spans 242–251 (SGLTSRNKNG). A compositionally biased stretch (pro residues) spans 277–287 (RPGPSNPPVGP). Polar residues predominate over residues 450–460 (QDSASPASSTG). 2 stretches are compositionally biased toward low complexity: residues 530 to 543 (GASSDSSASTGSHE) and 573 to 584 (DPASPALSLSSL). A compositionally biased stretch (polar residues) spans 591–601 (AETQGQGTEQA). Composition is skewed to low complexity over residues 625-637 (SSTPSTCTSSQQG) and 645-654 (ASAMSSPSSP). Residues 661-670 (PRGHPRHSHY) are compositionally biased toward basic residues. Composition is skewed to polar residues over residues 711-740 (TRTQASGNLRPPSSGSLPSQDLLGTSSATV) and 825-835 (CCSQPGTQPAQ). Low complexity-rich tracts occupy residues 864–880 (QRRSSSCGSTGSSHQST), 903–921 (PNSGASRRSSASQGAGSRG), and 941–953 (SGVSPSSLPRSSP). 2 stretches are compositionally biased toward polar residues: residues 1223-1238 (LVTQGTELPLKTSNQR) and 1285-1299 (ASSNLEQLAENTVQE). The 1-1; approximate repeat unit spans residues 1292–1307 (LAENTVQEEVQLEETK). Residues 1292-1342 (LAENTVQEEVQLEETKEGTEGEGLQEEAVQLEETKTEEGLQEEGVQLEETK) form a 3 X 16 AA approximate tandem repeats of T-E-E-G-L-Q-E-E-G-V-Q-L-E-E-T-K region. Residues 1310–1326 (TEGEGLQEEAVQLEETK) form a 1-2; approximate repeat. The 1-3 repeat unit spans residues 1327 to 1342 (TEEGLQEEGVQLEETK). Acidic residues predominate over residues 1346-1363 (GEGQQEEEAQLEEIEETG). Over residues 1434-1445 (RASASAEPCPAE) the composition is skewed to low complexity. Composition is skewed to polar residues over residues 1460–1472 (TDPSASERQSGSQ) and 1489–1501 (EHTQAQPTQGAAE). Positions 1726 to 1736 (AEGGLGPGLSQ) are enriched in gly residues. 2 stretches are compositionally biased toward basic and acidic residues: residues 1752–1762 (LNRDKDPKLGE) and 1769–1778 (AQEREGKTHN). 3 consecutive repeat copies span residues 1836–1851 (EAPEAEGEAQPESEGV), 1852–1867 (EAPEAEGDAQEAEGEA), and 1875–1890 (EAPEAEGEAQPESEDV). Composition is skewed to acidic residues over residues 1836–1909 (EAPE…AEAP) and 1920–1948 (ESVEALETEGEDEPESEGAEAQEAEEAAQ). The interval 1836–2244 (EAPEAEGEAQ…GEAQPESEGE (409 aa)) is 25 X 16 AA approximate tandem repeats of [ED]-[AT]-[PQ]-[ED]-[AVT]-E-[GKE]-[ED]-[AMT]-Q-[EPK]-[EAT]-[TSELP]-[EG]-[EGSQDI]-[AVIE]. The 2-4; approximate repeat unit spans residues 1891–1906 (ETPEAEWEVQPESEGA). Residues 1907–1921 (EAPEAEKEAQPETES) form a 2-5 repeat. Residues 1923–1938 (EALETEGEDEPESEGA) form a 2-6; approximate repeat. Residues 1934 to 2017 (ESEGAEAQEA…EMQEAEEEAQ (84 aa)) are a coiled coil. A 2-7 repeat occupies 1939–1954 (EAQEAEEAAQEAEGQT). Over residues 1949–1958 (EAEGQTQPES) the composition is skewed to low complexity. Residues 1955–1970 (QPESEVIESQEAEEEA) form a 2-8; approximate repeat. Composition is skewed to acidic residues over residues 1959–2022 (EVIE…ESDG), 2048–2075 (AQPESDGVEAPEAEEEAQEAEGEVQEAE), 2083–2108 (EDVDAQEAEGEAQPESEGVEAPEAEG), and 2117–2245 (EAPE…EGET). A 2-9; approximate repeat occupies 1971–1984 (QPESEDVEALEVEV). A run of 2 repeats spans residues 1985–2000 (ETQEAEGEAQPESEDV) and 2001–2016 (EAPEAEGEMQEAEEEA). A 2-12; approximate repeat occupies 2017–2031 (QPESDGVEAQPKSEG). The stretch at 2033-2048 (EAQEVEGETQKTEGDA) is one 2-13d repeat. Residues 2054–2081 (GVEAPEAEEEAQEAEGEVQEAEGEAHPE) are a coiled coil. Residues 2056 to 2071 (EAPEAEEEAQEAEGEV) form a 2-14 repeat. One copy of the 2-15; approximate repeat lies at 2072–2085 (QEAEGEAHPESEDV). A run of 10 repeats spans residues 2086-2101 (DAQEAEGEAQPESEGV), 2102-2116 (EAPEAEGEAQKAEGI), 2117-2132 (EAPETEGEAQPESEGI), 2133-2148 (EAPEAEGEAQPESEGV), 2149-2164 (EAQDAEGEAQPESEGI), 2165-2180 (EAQEAEEEAQPELEGV), 2181-2196 (EAPEAEGEAQPESEGI), 2197-2212 (EAPEAEGEAQPELEGV), 2213-2228 (EAPEAEEEAQPEPEGV), and 2229-2244 (ETPEAEGEAQPESEGE). The span at 2292–2308 (PGSQTGPSSSRASSWGN) shows a compositional bias: polar residues. The span at 2312-2327 (KDSENDHVLGDTRSPD) shows a compositional bias: basic and acidic residues.

As to quaternary structure, interacts with RP1; has a synergistic effect with RP1 in photoreceptor differentiation. Retinal-specific; expressed in photoreceptor.

The protein resides in the cytoplasm. Its subcellular location is the cytoskeleton. It localises to the cilium axoneme. It is found in the cell projection. The protein localises to the cilium. The protein resides in the photoreceptor outer segment. Required for the differentiation of photoreceptor cells. Plays a role in the organization of outer segment of rod and cone photoreceptors. This Homo sapiens (Human) protein is Retinitis pigmentosa 1-like 1 protein (RP1L1).